The primary structure comprises 243 residues: 3-deoxy-manno-octulosonate cytidylyltransferase (243 aa).

This sequence belongs to the KdsB family.

The protein resides in the cytoplasm. The catalysed reaction is 3-deoxy-alpha-D-manno-oct-2-ulosonate + CTP = CMP-3-deoxy-beta-D-manno-octulosonate + diphosphate. The protein operates within nucleotide-sugar biosynthesis; CMP-3-deoxy-D-manno-octulosonate biosynthesis; CMP-3-deoxy-D-manno-octulosonate from 3-deoxy-D-manno-octulosonate and CTP: step 1/1. It participates in bacterial outer membrane biogenesis; lipopolysaccharide biosynthesis. In terms of biological role, activates KDO (a required 8-carbon sugar) for incorporation into bacterial lipopolysaccharide in Gram-negative bacteria. This chain is 3-deoxy-manno-octulosonate cytidylyltransferase, found in Bartonella bacilliformis (strain ATCC 35685 / KC583 / Herrer 020/F12,63).